Reading from the N-terminus, the 166-residue chain is Regulatory protein RecX (166 aa).

It belongs to the RecX family.

Its subcellular location is the cytoplasm. Modulates RecA activity. This Salmonella paratyphi A (strain ATCC 9150 / SARB42) protein is Regulatory protein RecX.